We begin with the raw amino-acid sequence, 293 residues long: Adenylyl-sulfate kinase 2, chloroplastic (293 aa).

The transit peptide at 1-59 (MEGLAIRASRPSVFCSIPGLGGDSHRKPPSDGFLKLPASSIPADSRKLVANSTSFHPIS) directs the protein to the chloroplast. Residue 122-130 (GLSGSGKST) coordinates ATP. Residues aspartate 152, arginine 155, arginine 169, asparagine 172, 195–196 (IS), and glycine 245 contribute to the substrate site. Serine 196 acts as the Phosphoserine intermediate in catalysis.

The protein belongs to the APS kinase family. Interacts with APK1. In terms of tissue distribution, expressed in root vasculature, root tips, leaf epidermal cells and funiculus of developing seeds.

Its subcellular location is the plastid. The protein resides in the chloroplast. The enzyme catalyses adenosine 5'-phosphosulfate + ATP = 3'-phosphoadenylyl sulfate + ADP + H(+). It participates in sulfur metabolism; hydrogen sulfide biosynthesis; sulfite from sulfate: step 2/3. In terms of biological role, catalyzes the synthesis of activated sulfate. Essential for plant reproduction and viability. Required for the production of glucosinolates. This chain is Adenylyl-sulfate kinase 2, chloroplastic (APK2), found in Arabidopsis thaliana (Mouse-ear cress).